Consider the following 680-residue polypeptide: Zinc finger protein 263 (680 aa).

Lysine 19 participates in a covalent cross-link: Glycyl lysine isopeptide (Lys-Gly) (interchain with G-Cter in SUMO2). The SCAN box domain maps to 43–125; the sequence is HLRFRRFRFQ…TLVERMQKEL (83 aa). The disordered stretch occupies residues 147 to 191; sequence LPLETAGESPSFKLEPMETERSPGPRLQELLDPSPQRDSQAVKER. A Glycyl lysine isopeptide (Lys-Gly) (interchain with G-Cter in SUMO2) cross-link involves residue lysine 159. Serine 168 and serine 180 each carry phosphoserine. Glycyl lysine isopeptide (Lys-Gly) (interchain with G-Cter in SUMO2) cross-links involve residues lysine 286, lysine 300, and lysine 376. 5 C2H2-type zinc fingers span residues 378-400, 434-456, 462-484, 490-512, and 518-540; these read HLCALCGKNFSNNSNLIRHQRIH, HKCLECGKCFSQNTHLTRHQRTH, FQCNACGKSFSCNSNLNRHQRTH, YKCPECGEIFAHSSNLLRHQRIH, and YRCSECGKSFSRSSHLVIHERTH. Glycyl lysine isopeptide (Lys-Gly) (interchain with G-Cter in SUMO2) cross-links involve residues lysine 570 and lysine 579. 4 consecutive C2H2-type zinc fingers follow at residues 572–594, 600–622, 628–650, and 656–678; these read FECSTCGKSFRQGMHLTRHQRTH, YKCILCGENFSHRSNLIRHQRIH, YTCHECGDSFSHSSNRIRHLRTH, and YKCSECGESFSRSSRLTSHQRTH.

The protein belongs to the krueppel C2H2-type zinc-finger protein family. As to quaternary structure, interacts with a number of proteins involved in chromatin modification and transcriptional corepression including DNMT1, DNMT3A, HDAC2, PHF8, TRIM28/KAP1, SETDB1, EZH2, UHRF1, CBX3/HP1-gamma, and CBX5/HP1-alpha; recruits these proteins to the SIX3 promoter region, leading to SIX3 transcriptional repression. Interacts with MAPK3/ERK1 and MAPK1/ERK2. Ubiquitinated, leading to proteasomal degradation. Expressed in Purkinje cells in the brain (at protein level).

The protein resides in the nucleus. In terms of biological role, transcription factor that binds to the consensus sequence 5'-TCCTCCC-3' and acts as a transcriptional repressor. Binds to the promoter region of SIX3 and recruits other proteins involved in chromatin modification and transcriptional corepression, resulting in methylation of the promoter and transcriptional repression. Acts as a transcriptional repressor of HS3ST1 and HS3ST3A1 via binding to gene promoter regions. The sequence is that of Zinc finger protein 263 from Mus musculus (Mouse).